The chain runs to 560 residues: Membrane protein insertase YidC (560 aa).

The helical transmembrane segment at I7–Y27 threads the bilayer. Residues A43–L72 form a disordered region. 4 helical membrane passes run I367 to F387, L437 to L457, F468 to M488, and P515 to V535.

This sequence belongs to the OXA1/ALB3/YidC family. Type 1 subfamily. As to quaternary structure, interacts with the Sec translocase complex via SecD. Specifically interacts with transmembrane segments of nascent integral membrane proteins during membrane integration.

It is found in the cell inner membrane. Functionally, required for the insertion and/or proper folding and/or complex formation of integral membrane proteins into the membrane. Involved in integration of membrane proteins that insert both dependently and independently of the Sec translocase complex, as well as at least some lipoproteins. Aids folding of multispanning membrane proteins. The chain is Membrane protein insertase YidC from Pseudomonas fluorescens (strain SBW25).